The sequence spans 189 residues: MAGKRALVILAKGAEEMETVIPVDVMRRAGIAVTVAGLAGKEPVQCSREVMICPDSSLEDAHKQGPYDVVLLPGGLLGAQNLSESPAVKEVLKDQEGRKGLIAAICAGPTALLAHGIAYGSTVTTHPGAKDKMMAGDHYKYSEARVQKDGNVITSRGPGTSFEFALTIVEELMGAEVAAQVKAPLILKD.

S-palmitoyl cysteine attachment occurs at residues C46 and C53. Position 67 is a phosphotyrosine (Y67). The S-palmitoyl cysteine moiety is linked to residue C106. C106 functions as the Nucleophile in the catalytic mechanism. Residue C106 is modified to Cysteine sulfinic acid (-SO2H). The residue at position 106 (C106) is a Cysteine sulfinic acid (-SO2H); alternate. Residue C106 is the site of S-palmitoyl cysteine; alternate attachment. H126 is a catalytic residue. K130 participates in a covalent cross-link: Glycyl lysine isopeptide (Lys-Gly) (interchain with G-Cter in SUMO). At K148 the chain carries N6-acetyllysine. Position 182 is an N6-succinyllysine (K182).

Belongs to the peptidase C56 family. In terms of assembly, homodimer. It depends on Deglycase activity does not require glutathione as a cofactor, however, glycated glutathione constitutes a PARK7 substrate. as a cofactor. Sumoylated on Lys-130 by pias2 or pias4; which is essential for cell-growth promoting activity and transforming activity. Post-translationally, undergoes cleavage of a C-terminal peptide and subsequent activation of protease activity in response to oxidative stress. As to expression, larval brain and gut from 96 hours post-fertilization (hpf). Ubiquitous in adult; most abundant in brain, eye, heart and muscle. Within brain, neuronal expression is widespread, particularly in the cerebellum, medullary reticular formation and diencephalon. Expressed in major forebrain and diencephalic dopaminergic cell groups.

The protein resides in the cell membrane. Its subcellular location is the cytoplasm. It localises to the nucleus. It is found in the membrane raft. The protein localises to the mitochondrion. The protein resides in the endoplasmic reticulum. The enzyme catalyses N(omega)-(1-hydroxy-2-oxopropyl)-L-arginyl-[protein] + H2O = lactate + L-arginyl-[protein] + H(+). It carries out the reaction N(6)-(1-hydroxy-2-oxopropyl)-L-lysyl-[protein] + H2O = lactate + L-lysyl-[protein] + H(+). The catalysed reaction is S-(1-hydroxy-2-oxopropyl)-L-cysteinyl-[protein] + H2O = lactate + L-cysteinyl-[protein] + H(+). It catalyses the reaction N(omega)-(1-hydroxy-2-oxoethyl)-L-arginyl-[protein] + H2O = L-arginyl-[protein] + glycolate + H(+). The enzyme catalyses N(6)-(1-hydroxy-2-oxoethyl)-L-lysyl-[protein] + H2O = glycolate + L-lysyl-[protein] + H(+). It carries out the reaction S-(1-hydroxy-2-oxoethyl)-L-cysteinyl-[protein] + H2O = glycolate + L-cysteinyl-[protein] + H(+). The catalysed reaction is N(2)-(1-hydroxy-2-oxopropyl)-dGTP + H2O = lactate + dGTP + H(+). It catalyses the reaction N(2)-(1-hydroxy-2-oxopropyl)-GTP + H2O = lactate + GTP + H(+). The enzyme catalyses N(2)-(1-hydroxy-2-oxopropyl)-GDP + H2O = lactate + GDP + H(+). It carries out the reaction N(2)-(1-hydroxy-2-oxopropyl)-GMP + H2O = lactate + GMP + H(+). The catalysed reaction is N(2)-(1-hydroxy-2-oxoethyl)-dGTP + H2O = dGTP + glycolate + H(+). It catalyses the reaction N(2)-(1-hydroxy-2-oxoethyl)-GTP + H2O = glycolate + GTP + H(+). The enzyme catalyses N(2)-(1-hydroxy-2-oxoethyl)-GDP + H2O = glycolate + GDP + H(+). It carries out the reaction N(2)-(1-hydroxy-2-oxoethyl)-GMP + H2O = glycolate + GMP + H(+). The catalysed reaction is an N(2)-(1-hydroxy-2-oxopropyl)-guanosine in RNA + H2O = a guanosine in RNA + lactate + H(+). It catalyses the reaction an N(2)-(1-hydroxy-2-oxopropyl)-2'-deoxyguanosine in DNA + H2O = a 2'-deoxyguanosine in DNA + lactate + H(+). The enzyme catalyses an N(2)-(1-hydroxy-2-oxoethyl)-guanosine in RNA + H2O = a guanosine in RNA + glycolate + H(+). It carries out the reaction an N(2)-(1-hydroxy-2-oxoethyl)-2'-deoxyguanosine in DNA + H2O = a 2'-deoxyguanosine in DNA + glycolate + H(+). Its function is as follows. Multifunctional protein with controversial molecular function which plays an important role in cell protection against oxidative stress and cell death acting as oxidative stress sensor and redox-sensitive chaperone and protease. It is involved in neuroprotective mechanisms like the stabilization of NFE2L2 and PINK1 proteins, male fertility as a positive regulator of androgen signaling pathway as well as cell growth and transformation through, for instance, the modulation of NF-kappa-B signaling pathway. Has been described as a protein and nucleotide deglycase that catalyzes the deglycation of the Maillard adducts formed between amino groups of proteins or nucleotides and reactive carbonyl groups of glyoxals. But this function is rebuted by other works. As a protein deglycase, repairs methylglyoxal- and glyoxal-glycated proteins, and releases repaired proteins and lactate or glycolate, respectively. Deglycates cysteine, arginine and lysine residues in proteins, and thus reactivates these proteins by reversing glycation by glyoxals. Acts on early glycation intermediates (hemithioacetals and aminocarbinols), preventing the formation of advanced glycation endproducts (AGE) that cause irreversible damage. Also functions as a nucleotide deglycase able to repair glycated guanine in the free nucleotide pool (GTP, GDP, GMP, dGTP) and in DNA and RNA. Is thus involved in a major nucleotide repair system named guanine glycation repair (GG repair), dedicated to reversing methylglyoxal and glyoxal damage via nucleotide sanitization and direct nucleic acid repair. Protects histones from adduction by methylglyoxal, controls the levels of methylglyoxal-derived argininine modifications on chromatin. Displays a very low glyoxalase activity that may reflect its deglycase activity. It is involved in neuroprotective mechanisms as well as cell growth and transformation. Its involvement in protein repair could also explain other unrelated functions. Eliminates hydrogen peroxide and protects cells against hydrogen peroxide-induced cell death. Required for correct mitochondrial morphology and function as well as for autophagy of dysfunctional mitochondria. Regulates astrocyte inflammatory responses, may modulate lipid rafts-dependent endocytosis in astrocytes and neuronal cells. Binds to a number of mRNAs containing multiple copies of GG or CC motifs and partially inhibits their translation but dissociates following oxidative stress. Metal-binding protein able to bind copper as well as toxic mercury ions, enhances the cell protection mechanism against induced metal toxicity. In Danio rerio (Zebrafish), this protein is Parkinson disease protein 7 homolog.